The sequence spans 335 residues: Cytoskeleton protein RodZ (335 aa).

Topologically, residues 1 to 111 (MNTEATHDQN…LGKRRKKRDG (111 aa)) are cytoplasmic. Residues 19–71 (LRNAREQLGLSQQAVAERLCLKVSTVRDIEEDKAPADLASTFLRGYIRSYARL) enclose the HTH cro/C1-type domain. Residues 30-49 (QQAVAERLCLKVSTVRDIEE) constitute a DNA-binding region (H-T-H motif). Residues 112–132 (WLMTFTWLVLFVVIGLSGAWW) form a helical; Signal-anchor for type II membrane protein membrane-spanning segment. Residues 133–335 (WQDHKAQQEE…TLNAEQSPAQ (203 aa)) lie on the Periplasmic side of the membrane. The span at 148 to 164 (DQSSAELNNNQSQSVPL) shows a compositional bias: polar residues. Residues 148–244 (DQSSAELNNN…PLPTDQAGVT (97 aa)) are disordered. Composition is skewed to low complexity over residues 165–205 (DTST…DPQQ) and 217–239 (DTAATPAPAATTTPDGAAPLPTD).

It belongs to the RodZ family.

It localises to the cell inner membrane. In terms of biological role, cytoskeletal protein that is involved in cell-shape control through regulation of the length of the long axis. The sequence is that of Cytoskeleton protein RodZ from Escherichia coli O127:H6 (strain E2348/69 / EPEC).